The chain runs to 430 residues: Divergent protein kinase domain 2A (430 aa).

Positions 1–35 are cleaved as a signal peptide; that stretch reads MWRLVPPKLGRLSRSLKLAALGSLLVLMVLHSPSL.

Belongs to the DIPK family.

The protein localises to the cytoplasmic vesicle. It is found in the COPI-coated vesicle. Its subcellular location is the golgi apparatus. It localises to the secreted. Its function is as follows. May play a role in cardiomyocyte proliferation through paracrine signaling and activation of the PPI3K-AKT-CDK7 signaling cascade. In Homo sapiens (Human), this protein is Divergent protein kinase domain 2A.